The primary structure comprises 178 residues: Interleukin-10 (178 aa).

A signal peptide spans 1–18 (MPGSALLCCLLLLAGVKT). The N-linked (GlcNAc...) asparagine glycan is linked to Asn29. Cystine bridges form between Cys30–Cys126 and Cys80–Cys132. Asn134 carries an N-linked (GlcNAc...) asparagine glycan.

It belongs to the IL-10 family. Homodimer. Interacts with IL10RA and IL10RB.

It is found in the secreted. Functionally, major immune regulatory cytokine that acts on many cells of the immune system where it has profound anti-inflammatory functions, limiting excessive tissue disruption caused by inflammation. Mechanistically, IL10 binds to its heterotetrameric receptor comprising IL10RA and IL10RB leading to JAK1 and STAT2-mediated phosphorylation of STAT3. In turn, STAT3 translocates to the nucleus where it drives expression of anti-inflammatory mediators. Targets antigen-presenting cells (APCs) such as macrophages and monocytes and inhibits their release of pro-inflammatory cytokines including granulocyte-macrophage colony-stimulating factor /GM-CSF, granulocyte colony-stimulating factor/G-CSF, IL-1 alpha, IL-1 beta, IL-6, IL-8 and TNF-alpha. Also interferes with antigen presentation by reducing the expression of MHC-class II and co-stimulatory molecules, thereby inhibiting their ability to induce T cell activation. In addition, controls the inflammatory response of macrophages by reprogramming essential metabolic pathways including mTOR signaling. This chain is Interleukin-10 (Il10), found in Rattus norvegicus (Rat).